A 124-amino-acid polypeptide reads, in one-letter code: Ribonuclease P protein component (124 aa).

This sequence belongs to the RnpA family. In terms of assembly, consists of a catalytic RNA component (M1 or rnpB) and a protein subunit.

It catalyses the reaction Endonucleolytic cleavage of RNA, removing 5'-extranucleotides from tRNA precursor.. Functionally, RNaseP catalyzes the removal of the 5'-leader sequence from pre-tRNA to produce the mature 5'-terminus. It can also cleave other RNA substrates such as 4.5S RNA. The protein component plays an auxiliary but essential role in vivo by binding to the 5'-leader sequence and broadening the substrate specificity of the ribozyme. This Maridesulfovibrio salexigens (strain ATCC 14822 / DSM 2638 / NCIMB 8403 / VKM B-1763) (Desulfovibrio salexigens) protein is Ribonuclease P protein component.